The primary structure comprises 163 residues: Nucleotide-binding protein MT0592 (163 aa).

This sequence belongs to the YajQ family.

In terms of biological role, nucleotide-binding protein. In Mycobacterium tuberculosis (strain CDC 1551 / Oshkosh), this protein is Nucleotide-binding protein MT0592.